The chain runs to 169 residues: Inorganic pyrophosphatase (169 aa).

Substrate is bound by residues Lys-26, Arg-40, and Tyr-52. Residues Asp-62, Asp-67, and Asp-99 each coordinate Mg(2+). Tyr-138 is a binding site for substrate.

This sequence belongs to the PPase family. In terms of assembly, homohexamer. The cofactor is Mg(2+).

It localises to the cytoplasm. The catalysed reaction is diphosphate + H2O = 2 phosphate + H(+). In terms of biological role, catalyzes the hydrolysis of inorganic pyrophosphate (PPi) forming two phosphate ions. The polypeptide is Inorganic pyrophosphatase (Thermoplasma volcanium (strain ATCC 51530 / DSM 4299 / JCM 9571 / NBRC 15438 / GSS1)).